Here is a 326-residue protein sequence, read N- to C-terminus: Glycolipid sulfotransferase MRA_1383 (326 aa).

40 to 45 (KSGLTW) serves as a coordination point for 3'-phosphoadenylyl sulfate. The active-site Proton acceptor is the His97. 116 to 124 (RDPRDAAVS) contacts 3'-phosphoadenylyl sulfate.

Belongs to the sulfotransferase 1 family.

Involved in the synthesis of cell wall sulfolipids. The sequence is that of Glycolipid sulfotransferase MRA_1383 from Mycobacterium tuberculosis (strain ATCC 25177 / H37Ra).